The primary structure comprises 164 residues: V-type proton ATPase subunit c' (164 aa).

Over 1–14 the chain is Vacuolar; sequence MSTQLASNIYAPLY. A helical transmembrane segment spans residues 15–37; sequence APFFGFAGCAAAMVLSCLGAAIG. The Cytoplasmic portion of the chain corresponds to 38 to 59; sequence TAKSGIGIAGIGTFKPELIMKS. Residues 60-80 form a helical membrane-spanning segment; that stretch reads LIPVVMSGILAIYGLVVAVLI. At 81–98 the chain is on the vacuolar side; sequence AGNLSPTEDYTLFNGFMH. A helical transmembrane segment spans residues 99–120; the sequence is LSCGLCVGFACLSSGYAIGMVG. Residues 121-132 lie on the Cytoplasmic side of the membrane; that stretch reads DVGVRKYMHQPR. A helical transmembrane segment spans residues 133–158; sequence LFVGIVLILIFSEVLGLYGMIVALIL. Over 159 to 164 the chain is Vacuolar; it reads NTRGSE.

Belongs to the V-ATPase proteolipid subunit family. As to quaternary structure, V-ATPase is a heteromultimeric enzyme composed of a peripheral catalytic V1 complex (components A to H) attached to an integral membrane V0 proton pore complex (components: a, c, c', c'', d, e, f and VOA1). The decameric c-ring forms the proton-conducting pore, and is composed of eight proteolipid subunits c, one subunit c' and one subunit c''.

The protein resides in the vacuole membrane. Its function is as follows. Proton-conducting pore forming subunit of the V0 complex of vacuolar(H+)-ATPase (V-ATPase), a multisubunit enzyme composed of a peripheral complex (V1) that hydrolyzes ATP and a membrane integral complex (V0) that translocates protons. V-ATPase is responsible for acidifying and maintaining the pH of intracellular compartments. In Saccharomyces cerevisiae (strain ATCC 204508 / S288c) (Baker's yeast), this protein is V-type proton ATPase subunit c' (VMA11).